A 399-amino-acid polypeptide reads, in one-letter code: 4-hydroxy-3-methylbut-2-enyl diphosphate reductase (399 aa).

[4Fe-4S] cluster is bound at residue Cys-66. Residue His-96 coordinates (2E)-4-hydroxy-3-methylbut-2-enyl diphosphate. His-96 provides a ligand contact to dimethylallyl diphosphate. His-96 contacts isopentenyl diphosphate. Cys-157 provides a ligand contact to [4Fe-4S] cluster. His-185 provides a ligand contact to (2E)-4-hydroxy-3-methylbut-2-enyl diphosphate. His-185 serves as a coordination point for dimethylallyl diphosphate. His-185 is a binding site for isopentenyl diphosphate. The Proton donor role is filled by Glu-187. Thr-250 is a (2E)-4-hydroxy-3-methylbut-2-enyl diphosphate binding site. Cys-288 is a [4Fe-4S] cluster binding site. (2E)-4-hydroxy-3-methylbut-2-enyl diphosphate-binding residues include Ser-317, Ser-318, Asn-319, and Ser-380. Dimethylallyl diphosphate contacts are provided by Ser-317, Ser-318, Asn-319, and Ser-380. Residues Ser-317, Ser-318, Asn-319, and Ser-380 each coordinate isopentenyl diphosphate.

It belongs to the IspH family. [4Fe-4S] cluster is required as a cofactor.

The enzyme catalyses isopentenyl diphosphate + 2 oxidized [2Fe-2S]-[ferredoxin] + H2O = (2E)-4-hydroxy-3-methylbut-2-enyl diphosphate + 2 reduced [2Fe-2S]-[ferredoxin] + 2 H(+). The catalysed reaction is dimethylallyl diphosphate + 2 oxidized [2Fe-2S]-[ferredoxin] + H2O = (2E)-4-hydroxy-3-methylbut-2-enyl diphosphate + 2 reduced [2Fe-2S]-[ferredoxin] + 2 H(+). It participates in isoprenoid biosynthesis; dimethylallyl diphosphate biosynthesis; dimethylallyl diphosphate from (2E)-4-hydroxy-3-methylbutenyl diphosphate: step 1/1. The protein operates within isoprenoid biosynthesis; isopentenyl diphosphate biosynthesis via DXP pathway; isopentenyl diphosphate from 1-deoxy-D-xylulose 5-phosphate: step 6/6. In terms of biological role, catalyzes the conversion of 1-hydroxy-2-methyl-2-(E)-butenyl 4-diphosphate (HMBPP) into a mixture of isopentenyl diphosphate (IPP) and dimethylallyl diphosphate (DMAPP). Acts in the terminal step of the DOXP/MEP pathway for isoprenoid precursor biosynthesis. This Synechococcus sp. (strain CC9902) protein is 4-hydroxy-3-methylbut-2-enyl diphosphate reductase.